Here is a 273-residue protein sequence, read N- to C-terminus: LDMGHMVNAIAQIDEFVNLGANSIETDVSFDDSANPEYTYHGVPCDCGGTCTKWEYFNEFLKGLRKATTPGDSKYHEKLVLVVFDLKTSSLYDNQASDAGKKLAKSLLQNYWNNGNNGGRAYIVLSIPNLAHYKLITGFKETLTSEGHPELMDKVGYDFSGNDEIGDVAKTYKKAGVTGHVWQSDGITNCLLRGLDRVRKAVANRDSSNGYINKVYYWTVDKRATTRDALDAGVDGIMTNYPDVIADVLNESAYKAKFRIASYDDNPWETFKN.

The active site involves His5. 2 residues coordinate Mg(2+): Glu25 and Asp27. Residue His41 is the Nucleophile of the active site. Intrachain disulfides connect Cys45–Cys51 and Cys47–Cys190. Position 85 (Asp85) interacts with Mg(2+). N-linked (GlcNAc...) asparagine glycosylation occurs at Asn250.

This sequence belongs to the arthropod phospholipase D family. Class II subfamily. Mg(2+) is required as a cofactor. As to expression, expressed by the venom gland.

It localises to the secreted. The enzyme catalyses an N-(acyl)-sphingosylphosphocholine = an N-(acyl)-sphingosyl-1,3-cyclic phosphate + choline. It carries out the reaction an N-(acyl)-sphingosylphosphoethanolamine = an N-(acyl)-sphingosyl-1,3-cyclic phosphate + ethanolamine. The catalysed reaction is a 1-acyl-sn-glycero-3-phosphocholine = a 1-acyl-sn-glycero-2,3-cyclic phosphate + choline. It catalyses the reaction a 1-acyl-sn-glycero-3-phosphoethanolamine = a 1-acyl-sn-glycero-2,3-cyclic phosphate + ethanolamine. Functionally, dermonecrotic toxins cleave the phosphodiester linkage between the phosphate and headgroup of certain phospholipids (sphingolipid and lysolipid substrates), forming an alcohol (often choline) and a cyclic phosphate. This toxin acts on sphingomyelin (SM). It may also act on ceramide phosphoethanolamine (CPE), lysophosphatidylcholine (LPC) and lysophosphatidylethanolamine (LPE), but not on lysophosphatidylserine (LPS), and lysophosphatidylglycerol (LPG). It acts by transphosphatidylation, releasing exclusively cyclic phosphate products as second products. Induces dermonecrosis, hemolysis, increased vascular permeability, edema, inflammatory response, and platelet aggregation. This is Dermonecrotic toxin LdSicTox-alphaIB1bi from Loxosceles deserta (Desert recluse spider).